A 217-amino-acid chain; its full sequence is Adenylate kinase (217 aa).

10-15 (GAGKGT) is an ATP binding site. The NMP stretch occupies residues 30 to 59 (STGDIFRANIKNNTELGAKAKEYMDQGLLV). AMP-binding positions include Thr-31, Arg-36, 57–59 (LLV), 85–88 (GFPR), and Gln-92. The interval 126 to 163 (GRRACVSCGGTYHVVFTPTKKEGICDACGGELTIRDDD) is LID. Arg-127 is an ATP binding site. Zn(2+) is bound by residues Cys-130 and Cys-133. ATP is bound at residue 136–137 (TY). Cys-150 and Cys-153 together coordinate Zn(2+). The AMP site is built by Arg-160 and Arg-171. Lys-199 serves as a coordination point for ATP.

It belongs to the adenylate kinase family. As to quaternary structure, monomer.

The protein localises to the cytoplasm. It carries out the reaction AMP + ATP = 2 ADP. It functions in the pathway purine metabolism; AMP biosynthesis via salvage pathway; AMP from ADP: step 1/1. Catalyzes the reversible transfer of the terminal phosphate group between ATP and AMP. Plays an important role in cellular energy homeostasis and in adenine nucleotide metabolism. This chain is Adenylate kinase, found in Lachnoclostridium phytofermentans (strain ATCC 700394 / DSM 18823 / ISDg) (Clostridium phytofermentans).